The primary structure comprises 56 residues: Probable head completion protein 2 (56 aa).

Belongs to the skunalikevirus head completion protein 2 family.

It is found in the virion. In terms of biological role, probably functions as a stopper that is part of the head-tail connector and that locks the viral DNA in the capsid. During assembly, functions as a docking platform which the preassembled tail can bind to. Plays a role in morphogenesis of the virion capsid after genome packaging. This is Probable head completion protein 2 from Lactococcus lactis (Lactococcus lactis bacteriophage SK1).